The chain runs to 216 residues: Refilin-A (216 aa).

Positions 1–83 (MVGHLHLQGM…LPNPPASEMR (83 aa)) are disordered. The segment covering 12–22 (DSLKEQGREGL) has biased composition (basic and acidic residues). Positions 29–39 (GLPPSPSPSPP) are enriched in pro residues. A compositionally biased stretch (low complexity) spans 57 to 71 (ASSEPPGPSEARAPP). Position 163 is an asymmetric dimethylarginine (R163).

Belongs to the Refilin family. Interacts with FLNA and FLNB.

It is found in the cytoplasm. It localises to the cytoskeleton. Its function is as follows. Involved in the regulation of the perinuclear actin network and nuclear shape through interaction with filamins. Plays an essential role in actin cytoskeleton formation in developing cartilaginous cells. The protein is Refilin-A of Homo sapiens (Human).